We begin with the raw amino-acid sequence, 576 residues long: Tudor and KH domain-containing protein homolog (576 aa).

The tract at residues 40–60 (EEADSGGQRPASGIRGQTEEQ) is disordered. KH domains lie at 65 to 127 (EVCL…RALL) and 136 to 199 (VVKV…RKML). Over residues 209 to 224 (LVRSMEEVEQRREPRR) the composition is skewed to basic and acidic residues. The disordered stretch occupies residues 209-253 (LVRSMEEVEQRREPRRSPTNSIASSMYSSQTSLSSHTQPRDKLMA). Residues 232-243 (SSMYSSQTSLSS) are compositionally biased toward low complexity. Positions 310 to 375 (APYVGQIVAA…CELRTDFLTL (66 aa)) constitute a Tudor domain. The tract at residues 556-576 (ATDLENGNNNNASTTNGASAH) is disordered. The span at 561 to 576 (NGNNNNASTTNGASAH) shows a compositional bias: low complexity.

This sequence belongs to the Tdrkh family. As to quaternary structure, interacts (via C-terminus) with AGO3 (via the N-terminal region when symmetrically methylated on arginine residues); this interaction is RNA-independent and may be required for AGO3 localization to the nuage. Interacts (via Tudor domain) with piwi (via N-terminus). Interacts with tral and me31B. In terms of tissue distribution, ovaries (at protein level). Expressed in the ovary and testis.

It localises to the cytoplasm. The protein localises to the nucleus. Its subcellular location is the cytoplasmic ribonucleoprotein granule. Functionally, involved in the piwi-interacting RNA (piRNA) metabolic process, which mediates the repression of transposable elements during meiosis by forming complexes composed of piRNAs and Piwi proteins, and governs the methylation and subsequent repression of transposons which is essential for germline integrity. Likely to act by recruiting Piwi proteins such as AGO3 and piwi to the piRNA biogenesis machinery in the nuage. Required for the final steps of primary piRNA biogenesis by participating in the 3' end-trimming of piwi-bound intermediates into mature piRNAs. The protein is Tudor and KH domain-containing protein homolog of Drosophila melanogaster (Fruit fly).